Consider the following 66-residue polypeptide: Beta-mammal toxin Co1 (66 aa).

The region spanning 1 to 66 is the LCN-type CS-alpha/beta domain; that stretch reads KEGYLVNHST…VWPLPKKTCN (66 aa). 4 disulfide bridges follow: C12–C65, C16–C41, C25–C46, and C29–C48.

In terms of tissue distribution, expressed by the venom gland.

It is found in the secreted. Beta toxins bind voltage-independently at site-4 of sodium channels (Nav) and shift the voltage of activation toward more negative potentials thereby affecting sodium channel activation and promoting spontaneous and repetitive firing. This toxin acts on human Nav1.6/SCN8A voltage-gated sodium channels. In vivo, is lethal to mice 40 minutes after intraperitoneal injection at a dose of 5ug. No activity is observed when injected into crickets or woodlice. This Centruroides ornatus (Scorpion) protein is Beta-mammal toxin Co1.